A 680-amino-acid chain; its full sequence is MDRQFKRTLITTALPYANGPVHIGHLAGVYVPADIYARYLRLRGRDCLLIGGSDEHGVPIALKAKAEGCTPQEVVDRYHELIKRSFEGLGISFDIYSRTTSDIHRRTASEFFKTLYEKGEFVEQTSEQYYDEEAKQFLADRYIIGTCPHCSNDRAYGDQCEACGTSLNATDLIDPRSTISGSAPVLRETKHWYLPLDKHEPFLKEWILDGHKEWKSNVYGQCKSWLDMGLQPRAVSRDLDWGIPVPVEGAEGKVLYVWFDAPIGYISNTKELCPDSWETWWKSEDTRLVHFIGKDNIVFHCIVFPAMLRAEGSFILPDNVPANEFLNLEGDKISTSRNWAVWLHEYLEEFPGKQDVLRYVLTANAPETKDNDFTWRDFQARNNNELVAIFGNFVNRALVLTHKYFDGAVPPKGELTDCDSRTIEEFAAVKQALEHQLDTFHFREALKEAMNLARIGNKYLADTEPWKLAKTDMNRVATILNLSLQITANLAIAFEPFLPFSSAKLMSMLSTDCPFGWDRLGSTDLLPEGHVLGNPELLFEKLEDSVIDAQIQKLQDTKLANEKAAHQAAPIAEDIAFEDFLKLDIRVGTVLECEKVPKADKLLRFRIDDGLSGRTIVSGIAKHYAPEELVGKQVCFIANLPPRKLKGIESEGMILSAEDADGSLRVIMPAAEVAAGSQVK.

The 'HIGH' region signature appears at 15 to 25; sequence PYANGPVHIGH. The Zn(2+) site is built by Cys-147, Cys-150, Cys-160, and Cys-163. Residues 332–336 carry the 'KMSKS' region motif; that stretch reads KISTS. Thr-335 contacts ATP. The tRNA-binding domain maps to 579–680; sequence DFLKLDIRVG…AEVAAGSQVK (102 aa).

The protein belongs to the class-I aminoacyl-tRNA synthetase family. MetG type 1 subfamily. Homodimer. It depends on Zn(2+) as a cofactor.

The protein localises to the cytoplasm. The enzyme catalyses tRNA(Met) + L-methionine + ATP = L-methionyl-tRNA(Met) + AMP + diphosphate. Its function is as follows. Is required not only for elongation of protein synthesis but also for the initiation of all mRNA translation through initiator tRNA(fMet) aminoacylation. In Porphyromonas gingivalis (strain ATCC BAA-308 / W83), this protein is Methionine--tRNA ligase.